The following is a 241-amino-acid chain: Biosynthetic peptidoglycan transglycosylase (241 aa).

The chain crosses the membrane as a helical span at residues 18–38; that stretch reads GVIGIIALWMAGILIFAFLPV.

Belongs to the glycosyltransferase 51 family.

The protein localises to the cell inner membrane. It catalyses the reaction [GlcNAc-(1-&gt;4)-Mur2Ac(oyl-L-Ala-gamma-D-Glu-L-Lys-D-Ala-D-Ala)](n)-di-trans,octa-cis-undecaprenyl diphosphate + beta-D-GlcNAc-(1-&gt;4)-Mur2Ac(oyl-L-Ala-gamma-D-Glu-L-Lys-D-Ala-D-Ala)-di-trans,octa-cis-undecaprenyl diphosphate = [GlcNAc-(1-&gt;4)-Mur2Ac(oyl-L-Ala-gamma-D-Glu-L-Lys-D-Ala-D-Ala)](n+1)-di-trans,octa-cis-undecaprenyl diphosphate + di-trans,octa-cis-undecaprenyl diphosphate + H(+). Its pathway is cell wall biogenesis; peptidoglycan biosynthesis. In terms of biological role, peptidoglycan polymerase that catalyzes glycan chain elongation from lipid-linked precursors. This Yersinia pestis bv. Antiqua (strain Antiqua) protein is Biosynthetic peptidoglycan transglycosylase.